A 212-amino-acid polypeptide reads, in one-letter code: Peroxisomal membrane protein 4 (212 aa).

The next 2 helical transmembrane spans lie at glycine 97 to glycine 117 and leucine 153 to tyrosine 173. The N-linked (GlcNAc...) asparagine glycan is linked to asparagine 206.

This sequence belongs to the peroxisomal membrane protein PXMP2/4 family. In terms of assembly, interacts with PEX19.

It is found in the peroxisome membrane. This is Peroxisomal membrane protein 4 (PXMP4) from Bos taurus (Bovine).